A 946-amino-acid polypeptide reads, in one-letter code: Protein translocase subunit SecA (946 aa).

Residues glutamine 87, 105-109 (GEGKT), and aspartate 524 contribute to the ATP site. Disordered regions lie at residues 872 to 892 (PEQP…NTGE) and 904 to 946 (PADT…GRYA). A compositionally biased stretch (basic and acidic residues) spans 907–917 (TVEKSERDPNR). Positions 930, 932, 941, and 942 each coordinate Zn(2+). A compositionally biased stretch (basic residues) spans 936–946 (KKYKHCHGRYA).

Belongs to the SecA family. As to quaternary structure, monomer and homodimer. Part of the essential Sec protein translocation apparatus which comprises SecA, SecYEG and auxiliary proteins SecDF-YajC and YidC. Zn(2+) serves as cofactor.

Its subcellular location is the cell inner membrane. It localises to the cytoplasm. It catalyses the reaction ATP + H2O + cellular proteinSide 1 = ADP + phosphate + cellular proteinSide 2.. Its function is as follows. Part of the Sec protein translocase complex. Interacts with the SecYEG preprotein conducting channel. Has a central role in coupling the hydrolysis of ATP to the transfer of proteins into and across the cell membrane, serving both as a receptor for the preprotein-SecB complex and as an ATP-driven molecular motor driving the stepwise translocation of polypeptide chains across the membrane. In Rhodopseudomonas palustris (strain BisB5), this protein is Protein translocase subunit SecA.